We begin with the raw amino-acid sequence, 207 residues long: Large ribosomal subunit protein uL4 (207 aa).

A disordered region spans residues histidine 49–isoleucine 78.

It belongs to the universal ribosomal protein uL4 family. As to quaternary structure, part of the 50S ribosomal subunit.

One of the primary rRNA binding proteins, this protein initially binds near the 5'-end of the 23S rRNA. It is important during the early stages of 50S assembly. It makes multiple contacts with different domains of the 23S rRNA in the assembled 50S subunit and ribosome. In terms of biological role, forms part of the polypeptide exit tunnel. The sequence is that of Large ribosomal subunit protein uL4 from Streptococcus sanguinis (strain SK36).